Reading from the N-terminus, the 143-residue chain is Small ribosomal subunit protein uS12 (143 aa).

Proline 62 bears the Hydroxyproline mark.

Belongs to the universal ribosomal protein uS12 family. In terms of assembly, component of the 40S small ribosomal subunit.

It localises to the cytoplasm. The protein localises to the cytosol. Its subcellular location is the rough endoplasmic reticulum. The chain is Small ribosomal subunit protein uS12 (rps-23) from Caenorhabditis elegans.